A 251-amino-acid polypeptide reads, in one-letter code: Ubiquinone/menaquinone biosynthesis C-methyltransferase UbiE (251 aa).

S-adenosyl-L-methionine contacts are provided by residues threonine 74, aspartate 95, and 123–124 (NA).

This sequence belongs to the class I-like SAM-binding methyltransferase superfamily. MenG/UbiE family.

It catalyses the reaction a 2-demethylmenaquinol + S-adenosyl-L-methionine = a menaquinol + S-adenosyl-L-homocysteine + H(+). The catalysed reaction is a 2-methoxy-6-(all-trans-polyprenyl)benzene-1,4-diol + S-adenosyl-L-methionine = a 5-methoxy-2-methyl-3-(all-trans-polyprenyl)benzene-1,4-diol + S-adenosyl-L-homocysteine + H(+). It participates in quinol/quinone metabolism; menaquinone biosynthesis; menaquinol from 1,4-dihydroxy-2-naphthoate: step 2/2. The protein operates within cofactor biosynthesis; ubiquinone biosynthesis. Its function is as follows. Methyltransferase required for the conversion of demethylmenaquinol (DMKH2) to menaquinol (MKH2) and the conversion of 2-polyprenyl-6-methoxy-1,4-benzoquinol (DDMQH2) to 2-polyprenyl-3-methyl-6-methoxy-1,4-benzoquinol (DMQH2). This chain is Ubiquinone/menaquinone biosynthesis C-methyltransferase UbiE, found in Shewanella piezotolerans (strain WP3 / JCM 13877).